Consider the following 111-residue polypeptide: uncharacterized protein (111 aa).

Its subcellular location is the cytoplasm. The protein localises to the nucleus. This is an uncharacterized protein from Schizosaccharomyces pombe (strain 972 / ATCC 24843) (Fission yeast).